The sequence spans 349 residues: Glycerol-3-phosphate dehydrogenase [NAD(+)], cytoplasmic (349 aa).

NAD(+) is bound at residue 10–15 (GSGNWG). Lys120 is a binding site for substrate. Ala153 lines the NAD(+) pocket. A Phosphoserine modification is found at Ser154. Lys204 functions as the Proton acceptor in the catalytic mechanism. NAD(+) is bound at residue Arg269. A substrate-binding site is contributed by 269–270 (RN). Lys289 is modified (N6-succinyllysine). NAD(+)-binding residues include Lys296 and Gln298. Tyr326 is subject to Phosphotyrosine.

It belongs to the NAD-dependent glycerol-3-phosphate dehydrogenase family. Homodimer.

Its subcellular location is the cytoplasm. The enzyme catalyses sn-glycerol 3-phosphate + NAD(+) = dihydroxyacetone phosphate + NADH + H(+). Its function is as follows. Has glycerol-3-phosphate dehydrogenase activity. The polypeptide is Glycerol-3-phosphate dehydrogenase [NAD(+)], cytoplasmic (Mus musculus (Mouse)).